Here is a 407-residue protein sequence, read N- to C-terminus: Tryptophan synthase beta chain (407 aa).

Residue lysine 91 is modified to N6-(pyridoxal phosphate)lysine.

The protein belongs to the TrpB family. Tetramer of two alpha and two beta chains. Pyridoxal 5'-phosphate serves as cofactor.

The enzyme catalyses (1S,2R)-1-C-(indol-3-yl)glycerol 3-phosphate + L-serine = D-glyceraldehyde 3-phosphate + L-tryptophan + H2O. It functions in the pathway amino-acid biosynthesis; L-tryptophan biosynthesis; L-tryptophan from chorismate: step 5/5. In terms of biological role, the beta subunit is responsible for the synthesis of L-tryptophan from indole and L-serine. The sequence is that of Tryptophan synthase beta chain from Streptococcus pneumoniae (strain P1031).